The sequence spans 200 residues: Large ribosomal subunit protein uL4 (200 aa).

Residues 38 to 67 are disordered; sequence GRQGSKAQKTRSEVSGGGKKPWRQKGTGRA.

The protein belongs to the universal ribosomal protein uL4 family. As to quaternary structure, part of the 50S ribosomal subunit.

Its function is as follows. One of the primary rRNA binding proteins, this protein initially binds near the 5'-end of the 23S rRNA. It is important during the early stages of 50S assembly. It makes multiple contacts with different domains of the 23S rRNA in the assembled 50S subunit and ribosome. Functionally, forms part of the polypeptide exit tunnel. The chain is Large ribosomal subunit protein uL4 from Pseudomonas paraeruginosa (strain DSM 24068 / PA7) (Pseudomonas aeruginosa (strain PA7)).